Reading from the N-terminus, the 616-residue chain is Matrix metalloproteinase-21 (616 aa).

The signal sequence occupies residues 1–22 (MPTAPALGALLLLLGALTPGHQ). The propeptide occupies 23–192 (EKLFHSRDHS…TSTSKIRKKR (170 aa)). The Cysteine switch motif lies at 139–146 (PRCGVPDN). Cys-141 is a Zn(2+) binding site. The disordered stretch occupies residues 157-186 (SNSNNVTEKASGKSLNTTTNQNPENGTSTS). N-linked (GlcNAc...) asparagine glycosylation is found at Asn-161, Asn-172, and Asn-181. Zn(2+) is bound at residue His-329. The active site involves Glu-330. Zn(2+) is bound by residues His-333 and His-339. Cys-375 and Cys-606 are disulfide-bonded. 4 Hemopexin repeats span residues 376-435 (EGSF…WHGI), 437-493 (AEGI…FPKI), 494-542 (PSPI…FPAV), and 549-605 (FGNI…WTDI). N-linked (GlcNAc...) asparagine glycosylation occurs at Asn-418. A glycan (N-linked (GlcNAc...) asparagine) is linked at Asn-597.

It belongs to the peptidase M10A family. Zn(2+) serves as cofactor. It depends on Ca(2+) as a cofactor. Post-translationally, the precursor is cleaved by a furin endopeptidase.

It localises to the secreted. Its function is as follows. May play a role in gastrulation-related cell movement. Plays a specialized role in the generation of left-right asymmetry during embryogenesis. May act as a negative regulator of the NOTCH-signaling pathway. In Cynops pyrrhogaster (Japanese fire-bellied newt), this protein is Matrix metalloproteinase-21 (MMP21).